The primary structure comprises 181 residues: HGPRTase-like protein 2 (181 aa).

This sequence belongs to the purine/pyrimidine phosphoribosyltransferase family. Archaeal HPRT subfamily.

Functionally, may catalyze a purine salvage reaction, the substrate is unknown. In Haloterrigena turkmenica (strain ATCC 51198 / DSM 5511 / JCM 9101 / NCIMB 13204 / VKM B-1734 / 4k) (Halococcus turkmenicus), this protein is HGPRTase-like protein 2.